The following is a 130-amino-acid chain: Small ribosomal subunit protein uS11c (130 aa).

Belongs to the universal ribosomal protein uS11 family. Part of the 30S ribosomal subunit.

The protein localises to the plastid. It is found in the chloroplast. In Chaetosphaeridium globosum (Charophycean green alga), this protein is Small ribosomal subunit protein uS11c.